The primary structure comprises 341 residues: Ribonucleoside-diphosphate reductase subunit beta (341 aa).

Aspartate 89, glutamate 120, and histidine 123 together coordinate Fe cation. Tyrosine 127 is a catalytic residue. Residues glutamate 185, glutamate 219, and histidine 222 each coordinate Fe cation.

Belongs to the ribonucleoside diphosphate reductase small chain family. As to quaternary structure, tetramer of two alpha and two beta subunits. Requires Fe cation as cofactor.

It carries out the reaction a 2'-deoxyribonucleoside 5'-diphosphate + [thioredoxin]-disulfide + H2O = a ribonucleoside 5'-diphosphate + [thioredoxin]-dithiol. Provides the precursors necessary for DNA synthesis. Catalyzes the biosynthesis of deoxyribonucleotides from the corresponding ribonucleotides. This is Ribonucleoside-diphosphate reductase subunit beta (nrdB) from Helicobacter pylori (strain J99 / ATCC 700824) (Campylobacter pylori J99).